Consider the following 653-residue polypeptide: Mannosyl-oligosaccharide 1,2-alpha-mannosidase IA (653 aa).

Over 1–41 (MPVGGLLPLFSSPAGGVLGGGLGGGGGRKGSGPAALRLTEK) the chain is Cytoplasmic. The chain crosses the membrane as a helical; Signal-anchor for type II membrane protein span at residues 42-62 (FVLLLVFSAFITLCFGAIFFL). The Lumenal portion of the chain corresponds to 63–653 (PDSSKLLSGV…DKKEVEIREE (591 aa)). A disordered region spans residues 81–116 (QPAADHKPGPGARAEDAAEGRARRREEGAPGDPEAA). Residues 84 to 108 (ADHKPGPGARAEDAAEGRARRREEG) are compositionally biased toward basic and acidic residues. Cys476 and Cys508 are oxidised to a cystine. N-linked (GlcNAc...) asparagine glycosylation occurs at Asn513. Residue Glu522 is the Proton donor of the active site.

The protein belongs to the glycosyl hydrolase 47 family. Ca(2+) is required as a cofactor.

The protein resides in the golgi apparatus membrane. The catalysed reaction is N(4)-(alpha-D-Man-(1-&gt;2)-alpha-D-Man-(1-&gt;2)-alpha-D-Man-(1-&gt;3)-[alpha-D-Man-(1-&gt;2)-alpha-D-Man-(1-&gt;3)-[alpha-D-Man-(1-&gt;2)-alpha-D-Man-(1-&gt;6)]-alpha-D-Man-(1-&gt;6)]-beta-D-Man-(1-&gt;4)-beta-D-GlcNAc-(1-&gt;4)-beta-D-GlcNAc)-L-asparaginyl-[protein] (N-glucan mannose isomer 9A1,2,3B1,2,3) + 4 H2O = N(4)-(alpha-D-Man-(1-&gt;3)-[alpha-D-Man-(1-&gt;3)-[alpha-D-Man-(1-&gt;6)]-alpha-D-Man-(1-&gt;6)]-beta-D-Man-(1-&gt;4)-beta-D-GlcNAc-(1-&gt;4)-beta-D-GlcNAc)-L-asparaginyl-[protein] (N-glucan mannose isomer 5A1,2) + 4 beta-D-mannose. It catalyses the reaction N(4)-(alpha-D-Man-(1-&gt;2)-alpha-D-Man-(1-&gt;2)-alpha-D-Man-(1-&gt;3)-[alpha-D-Man-(1-&gt;3)-[alpha-D-Man-(1-&gt;2)-alpha-D-Man-(1-&gt;6)]-alpha-D-Man-(1-&gt;6)]-beta-D-Man-(1-&gt;4)-beta-D-GlcNAc-(1-&gt;4)-beta-D-GlcNAc)-L-asparaginyl-[protein] (N-glucan mannose isomer 8A1,2,3B1,3) + 3 H2O = N(4)-(alpha-D-Man-(1-&gt;3)-[alpha-D-Man-(1-&gt;3)-[alpha-D-Man-(1-&gt;6)]-alpha-D-Man-(1-&gt;6)]-beta-D-Man-(1-&gt;4)-beta-D-GlcNAc-(1-&gt;4)-beta-D-GlcNAc)-L-asparaginyl-[protein] (N-glucan mannose isomer 5A1,2) + 3 beta-D-mannose. It participates in protein modification; protein glycosylation. Inhibited by both 1-deoxymannojirimycin and kifunensine. In terms of biological role, involved in the maturation of Asn-linked oligosaccharides. Progressively trim alpha-1,2-linked mannose residues from Man(9)GlcNAc(2) to produce Man(5)GlcNAc(2). This Homo sapiens (Human) protein is Mannosyl-oligosaccharide 1,2-alpha-mannosidase IA (MAN1A1).